The primary structure comprises 313 residues: uncharacterized protein (313 aa).

Residues 2–57 enclose the HTH deoR-type domain; that stretch reads KLERLLAMVVLLISKKQVQAAELAELFEVSVRTIYRDIETINRAGIPIVTSQGSGG. The segment at residues 19–38 is a DNA-binding region (H-T-H motif); sequence VQAAELAELFEVSVRTIYRD. The WYL domain maps to 131–210; the sequence is HTEDQKTLRE…KDLAILHQTF (80 aa).

Its subcellular location is the cytoplasm. This is an uncharacterized protein from Bacillus subtilis (strain 168).